The following is a 113-amino-acid chain: MHEMSLCEGILQILEEEARRQMFSRVRTVRLEVGELAGVELDAMYFGFDVVCRDTLADGARLEIVQRPGQAFCLGCGERVAVRRRFDACPDCGSYQLQVIGGDELRIKDLEVD.

His2 provides a ligand contact to Ni(2+). The Zn(2+) site is built by Cys73, Cys76, Cys89, and Cys92.

The protein belongs to the HypA/HybF family.

Functionally, involved in the maturation of [NiFe] hydrogenases. Required for nickel insertion into the metal center of the hydrogenase. In Alkalilimnicola ehrlichii (strain ATCC BAA-1101 / DSM 17681 / MLHE-1), this protein is Hydrogenase maturation factor HypA.